A 148-amino-acid chain; its full sequence is MKVELKILNKELIKELPGYATEGSAAIDLRACISESIYLKSGECKLVATGIAINIANPNYAAMILPRSGLGHKKGLVLGNGTGLIDSDYQGELMVSCFNRSQETIEIEPLMRFAQLVIVPVVQANFEIVEDFSQQSVRATGGFGHTGV.

Substrate-binding positions include 67 to 69 (RSG), Asn80, 84 to 86 (LID), and Met94.

Belongs to the dUTPase family. Mg(2+) is required as a cofactor.

The catalysed reaction is dUTP + H2O = dUMP + diphosphate + H(+). It functions in the pathway pyrimidine metabolism; dUMP biosynthesis; dUMP from dCTP (dUTP route): step 2/2. In terms of biological role, this enzyme is involved in nucleotide metabolism: it produces dUMP, the immediate precursor of thymidine nucleotides and it decreases the intracellular concentration of dUTP so that uracil cannot be incorporated into DNA. This chain is Deoxyuridine 5'-triphosphate nucleotidohydrolase, found in Francisella tularensis subsp. tularensis (strain FSC 198).